A 422-amino-acid polypeptide reads, in one-letter code: Putidaredoxin reductase CamA (422 aa).

FAD-binding residues include A15, D37, K50, V83, and R134. Position 156-165 (G156–A165) interacts with NAD(+). FAD is bound by residues D284 and V302.

The protein belongs to the FAD-dependent oxidoreductase family. Homodimer or monomer. It depends on FAD as a cofactor.

It carries out the reaction 2 reduced [2Fe-2S]-[putidaredoxin] + NAD(+) + H(+) = 2 oxidized [2Fe-2S]-[putidaredoxin] + NADH. The protein operates within terpene metabolism; (R)-camphor degradation. The oxidation of camphor by cytochrome P450-CAM CamC requires the participation of the flavoprotein, putidaredoxin reductase CamA, and the iron-sulfur protein, putidaredoxin CamB, to mediate the transfer of electrons from NADH to P450 for oxygen activation. The protein is Putidaredoxin reductase CamA of Pseudomonas putida (Arthrobacter siderocapsulatus).